A 450-amino-acid chain; its full sequence is Tubulin beta chain (450 aa).

Residues Glu69, Ser138, Gly142, Thr143, Gly144, Asn204, and Asn226 each contribute to the GTP site. Glu69 contacts Mg(2+). Positions 427 to 450 are disordered; it reads DATIDQEFEDEEEVEEQNDDSDEQ. Positions 430–450 are enriched in acidic residues; the sequence is IDQEFEDEEEVEEQNDDSDEQ.

It belongs to the tubulin family. In terms of assembly, dimer of alpha and beta chains. A typical microtubule is a hollow water-filled tube with an outer diameter of 25 nm and an inner diameter of 15 nM. Alpha-beta heterodimers associate head-to-tail to form protofilaments running lengthwise along the microtubule wall with the beta-tubulin subunit facing the microtubule plus end conferring a structural polarity. Microtubules usually have 13 protofilaments but different protofilament numbers can be found in some organisms and specialized cells. The cofactor is Mg(2+).

The protein resides in the cytoplasm. It is found in the cytoskeleton. Functionally, tubulin is the major constituent of microtubules, a cylinder consisting of laterally associated linear protofilaments composed of alpha- and beta-tubulin heterodimers. Microtubules grow by the addition of GTP-tubulin dimers to the microtubule end, where a stabilizing cap forms. Below the cap, tubulin dimers are in GDP-bound state, owing to GTPase activity of alpha-tubulin. This Bombyx mori (Silk moth) protein is Tubulin beta chain.